Reading from the N-terminus, the 381-residue chain is L-lactate dehydrogenase (381 aa).

An FMN hydroxy acid dehydrogenase domain is found at 1–380 (MIISSANDYR…TRDALVDLSK (380 aa)). Tyrosine 24 serves as a coordination point for substrate. Residues serine 106 and glutamine 127 each coordinate FMN. Tyrosine 129 serves as a coordination point for substrate. Threonine 155 serves as a coordination point for FMN. Substrate is bound at residue arginine 164. Residue lysine 251 participates in FMN binding. The active-site Proton acceptor is the histidine 275. A substrate-binding site is contributed by arginine 278. Residue 306–330 (DSGIRNGLDIVRMLALGADATMLGR) coordinates FMN.

Belongs to the FMN-dependent alpha-hydroxy acid dehydrogenase family. Requires FMN as cofactor.

The protein localises to the cell inner membrane. It catalyses the reaction (S)-lactate + A = pyruvate + AH2. Functionally, catalyzes the conversion of L-lactate to pyruvate. Is coupled to the respiratory chain. The chain is L-lactate dehydrogenase from Actinobacillus pleuropneumoniae serotype 5b (strain L20).